The chain runs to 395 residues: F-box only protein 7 (395 aa).

In terms of domain architecture, F-box spans 19-70 (NHDWSKLCPDILRKIIESLSSLDFYRAKIVCSDWYSVWKTCVKRPLRPWRII).

In Arabidopsis thaliana (Mouse-ear cress), this protein is F-box only protein 7 (FBX7).